We begin with the raw amino-acid sequence, 400 residues long: DNA alpha-glucosyltransferase (400 aa).

Interacts with clamp protein gp45.

It carries out the reaction Transfers an alpha-D-glucosyl residue from UDP-glucose to a hydroxymethylcytosine residue in DNA.. It functions in the pathway genetic information processing; DNA modification. In terms of biological role, catalyzes the transfer of glucose from uridine diphosphoglucose to 5-hydroxymethyl cytosine of T4 DNA to yield glucosyl 5-hydroxymethyl cytosine (glc-HMC). This DNA process seems to occur immediately after DNA synthesis since the DNA alpha-glucosyltransferase interacts with the clamp protein gp45. The glc-HMC modification protects the phage genome against its own nucleases and the host restriction endonuclease system. The glc-HMC modification also protects against the host CRISPR-Cas9 defense system. This is DNA alpha-glucosyltransferase (agt) from Escherichia coli (Bacteriophage T4).